The primary structure comprises 655 residues: MAKQRRDESPSGLSDIVEPDGLLGTGLTSRHIEAFGRKVTSTAGHLMGPTTESSNGGHYHTAMVDIHRELRRPTTQRKVFSLTQTTPTDLVRSKLSTTEIQSRAISSLPDELLANIPEDSSSYSLFEGFKATQDDHEYRKSHRRRSSKAKKLLKDGQAKEALPSAPTDLKKDRDLLSRRLDLMGVRKNMCSSEIHDIDNKIANLHNMRKIVLERLAGLEMEEAELEHELTEIDNKLEDIQEDTPGTPVAVSTPKSSEAADDSVLSEDSAMDASFMSESIYQKLPSPKSLKKRSIRKRSMPILHEHFSPGSQIKEMQAHTDMVTAIDFDYPFGTMVSAALDDTVRVWDLNTGRCMGFLEGHNASVRCLQVEDNIVATGSMDASVKLWDLSRARTVPRDNRVGRPDEEDEEDDGTDAFSILSATTLEDCYVFSLDAHVDEVTALHFRGDTLISGSADKTLRQWDLVKGRCVQTLDVLWAAAQASTIGADTQWRPSGRLPDASADFVGAVQCFDAALACGTADGMVRLWDLRSGQVHRSLVGHTGPITCLQFDEVHLVTGSQDRSIRIWDLRMGSIFDAFAYEKPITSMMFDTKRIVAAAGENVVKVYDKADSNHWDCGAGLGADEVGPAPATVERVRLKDGYLLEGRKDGIVAAWTC.

Disordered regions lie at residues 1–22 (MAKQ…PDGL), 134–170 (DDHE…TDLK), and 240–263 (QEDT…DDSV). Residues 139–151 (RKSHRRRSSKAKK) are compositionally biased toward basic residues. Residues 199–244 (NKIANLHNMRKIVLERLAGLEMEEAELEHELTEIDNKLEDIQEDTP) adopt a coiled-coil conformation. 7 WD repeats span residues 317 to 358 (AHTD…GFLE), 359 to 396 (GHNA…TVPR), 434 to 473 (AHVD…QTLD), 479 to 536 (AQAS…VHRS), 539 to 578 (GHTG…DAFA), 580 to 615 (EKPI…HWDC), and 626 to 655 (PAPA…AWTC).

The protein belongs to the WD repeat MDV1/CAF4 family.

It is found in the mitochondrion outer membrane. Involved in mitochondrial fission. Acts as an adapter protein required to form mitochondrial fission complexes. Formation of these complexes is required to promote constriction and fission of the mitochondrial compartment at a late step in mitochondrial division. The sequence is that of Mitochondrial division protein 1 (mdv1) from Aspergillus clavatus (strain ATCC 1007 / CBS 513.65 / DSM 816 / NCTC 3887 / NRRL 1 / QM 1276 / 107).